We begin with the raw amino-acid sequence, 263 residues long: Hydroxyethylthiazole kinase 1 (263 aa).

M42 is a binding site for substrate. The ATP site is built by K118 and T164. Position 191 (G191) interacts with substrate.

Belongs to the Thz kinase family. It depends on Mg(2+) as a cofactor.

It carries out the reaction 5-(2-hydroxyethyl)-4-methylthiazole + ATP = 4-methyl-5-(2-phosphooxyethyl)-thiazole + ADP + H(+). It participates in cofactor biosynthesis; thiamine diphosphate biosynthesis; 4-methyl-5-(2-phosphoethyl)-thiazole from 5-(2-hydroxyethyl)-4-methylthiazole: step 1/1. Functionally, catalyzes the phosphorylation of the hydroxyl group of 4-methyl-5-beta-hydroxyethylthiazole (THZ). The polypeptide is Hydroxyethylthiazole kinase 1 (Clostridium botulinum (strain ATCC 19397 / Type A)).